Consider the following 139-residue polypeptide: MADKKSSPKKENPQDKTYAIVEASGKQFWLQPNRYYDFDRCQAEVDDVLTLENVLLLNDGKDLKLGKPYVKDAKVEIKVLEHRRGPKIIVYKMRPKKKTRRKNGHRQELTRVLVQSISIGSNTKKSKAVKTTASKVESD.

It belongs to the bacterial ribosomal protein bL21 family. In terms of assembly, part of the 50S ribosomal subunit. Contacts protein L20.

This protein binds to 23S rRNA in the presence of protein L20. This chain is Large ribosomal subunit protein bL21, found in Prochlorococcus marinus (strain NATL1A).